We begin with the raw amino-acid sequence, 109 residues long: Iron-sulfur cluster assembly protein CyaY (109 aa).

The protein belongs to the frataxin family.

Functionally, involved in iron-sulfur (Fe-S) cluster assembly. May act as a regulator of Fe-S biogenesis. This Shewanella sp. (strain ANA-3) protein is Iron-sulfur cluster assembly protein CyaY.